A 622-amino-acid polypeptide reads, in one-letter code: Low affinity potassium transport system protein Kup (622 aa).

12 helical membrane passes run 9–29, 49–69, 103–123, 137–157, 165–185, 213–233, 247–267, 276–296, 337–357, 363–383, 396–416, and 419–439; these read LPAITLAAIGVVYGDIGTSPL, VFGFLSLIFWLLIFVVSIKYL, VIMGLIGGSFFYGEVVITPAI, PQLDTWIVPLSIIVLTLLFMI, VGQLFAPIMLTWFLILAGLGL, VSFIALGAVVLSITGVEALYA, WFTVVLPSLTLNYFGQGALLL, PFFLLAPDWALIPLLIIAALA, IYIPFVNWMLYVAVVIVIVSF, LAAAYGIAVTGTMVLTSILST, FVALILIAFLCVDIPLFTANL, and LLSGGWLPLSLGTVMFIVMTT.

This sequence belongs to the HAK/KUP transporter (TC 2.A.72) family.

The protein resides in the cell inner membrane. The catalysed reaction is K(+)(in) + H(+)(in) = K(+)(out) + H(+)(out). Functionally, responsible for the low-affinity transport of potassium into the cell. Likely operates as a K(+):H(+) symporter. The polypeptide is Low affinity potassium transport system protein Kup (Escherichia coli O6:K15:H31 (strain 536 / UPEC)).